Reading from the N-terminus, the 101-residue chain is Putative pterin-4-alpha-carbinolamine dehydratase (101 aa).

It belongs to the pterin-4-alpha-carbinolamine dehydratase family.

It carries out the reaction (4aS,6R)-4a-hydroxy-L-erythro-5,6,7,8-tetrahydrobiopterin = (6R)-L-erythro-6,7-dihydrobiopterin + H2O. This Rhodopseudomonas palustris (strain BisA53) protein is Putative pterin-4-alpha-carbinolamine dehydratase.